The following is an 898-amino-acid chain: MAVRPGLWPVLLGIVLAAWLRGSGAQQSATVANPVPGANPDLLPHFLVEPEDVYIVKNKPVLLVCKAVPATQIFFKCNGEWVRQVDHVIERSTDSSSGLPTMEVRINVSRQQVEKVFGLEEYWCQCVAWSSSGTTKSQKAYIRIAYLRKNFEQEPLAKEVSLEQGIVLPCRPPEGIPPAEVEWLRNEDLVDPSLDPNVYITREHSLVVRQARLADTANYTCVAKNIVARRRSTSAAVIVYVNGGWSTWTEWSVCSASCGRGWQKRSRSCTNPAPLNGGAFCEGQNVQKTACATLCPVDGSWSSWSKWSACGLDCTHWRSRECSDPAPRNGGEECRGADLDTRNCTSDLCLHTASCPEDVALYIGLVAVAVCLFLLLLALGLIYCRKKEGLDSDVADSSILTSGFQPVSIKPSKADNPHLLTIQPDLSTTTTTYQGSLCSRQDGPSPKFQLSNGHLLSPLGSGRHTLHHSSPTSEAEDFVSRLSTQNYFRSLPRGTSNMAYGTFNFLGGRLMIPNTGISLLIPPDAIPRGKIYEIYLTLHKPEDVRLPLAGCQTLLSPVVSCGPPGVLLTRPVILAMDHCGEPSPDSWSLRLKKQSCEGSWEDVLHLGEESPSHLYYCQLEAGACYVFTEQLGRFALVGEALSVAATKRLRLLLFAPVACTSLEYNIRVYCLHDTHDALKEVVQLEKQLGGQLIQEPRVLHFKDSYHNLRLSIHDVPSSLWKSKLLVSYQEIPFYHIWNGTQQYLHCTFTLERINASTSDLACKVWVWQVEGDGQSFNINFNITKDTRFAELLALESEGGVPALVGPSAFKIPFLIRQKIIASLDPPCSRGADWRTLAQKLHLDSHLSFFASKPSPTAMILNLWEARHFPNGNLGQLAAAVAGLGQPDAGLFTVSEAEC.

A signal peptide spans 1–25 (MAVRPGLWPVLLGIVLAAWLRGSGA). Topologically, residues 26–361 (QQSATVANPV…TASCPEDVAL (336 aa)) are extracellular. The 98-residue stretch at 44 to 141 (PHFLVEPEDV…SGTTKSQKAY (98 aa)) folds into the Ig-like domain. Disulfide bonds link Cys65–Cys126, Cys77–Cys124, and Cys170–Cys221. N-linked (GlcNAc...) asparagine glycans are attached at residues Asn107 and Asn218. In terms of domain architecture, Ig-like C2-type spans 155-238 (PLAKEVSLEQ…RRRSTSAAVI (84 aa)). TSP type-1 domains lie at 242 to 296 (NGGW…TLCP) and 298 to 350 (DGSW…DLCL). C-linked (Man) tryptophan glycosylation is found at Trp245, Trp248, and Trp251. Intrachain disulfides connect Cys254–Cys291, Cys258–Cys295, and Cys269–Cys281. Residues Trp301 and Trp304 are each glycosylated (C-linked (Man) tryptophan). 3 cysteine pairs are disulfide-bonded: Cys310–Cys344, Cys314–Cys349, and Cys322–Cys334. N-linked (GlcNAc...) asparagine glycosylation is present at Asn343. A helical membrane pass occupies residues 362 to 382 (YIGLVAVAVCLFLLLLALGLI). Residues 383–898 (YCRKKEGLDS…GLFTVSEAEC (516 aa)) lie on the Cytoplasmic side of the membrane. The ZU5 domain occupies 497–640 (NMAYGTFNFL…LGRFALVGEA (144 aa)). The tract at residues 661–679 (SLEYNIRVYCLHDTHDALK) is interaction with DCC. One can recognise a Death domain in the interval 817–897 (QKIIASLDPP…AGLFTVSEAE (81 aa)).

The protein belongs to the unc-5 family. Homodimer and homooligomer. Interacts with the cytoplasmic part of DCC. Interacts with MAGED1. Interacts with PRKCABP, possibly mediating some interaction with PKC. Interacts (via extracellular domain) with FLRT2 (via extracellular domain). Interacts (via extracellular domain) with FLRT3 (via extracellular domain). Phosphorylated on cytoplasmic tyrosine residues. Phosphorylated by PKC in vitro. In terms of processing, proteolytically cleaved by caspases during apoptosis. The cleavage does not take place when the receptor is associated with netrin ligand. Its cleavage by caspases is required to induce apoptosis. Post-translationally, the two extracellular TSRs of UNC5A contain WxxWxxWxxC motifs that can be C-mannosylated on all tryptophans. DPY19L1 preferentially mannosylates the first two tryptophans and DPY19L3 prefers the third. C-mannosylation by DPY19L1 is required for transport of UNC5A from the endoplasmic reticulum to the cell surface. Mainly expressed in regions of differentiating neurons. Expressed at early stages of neural tube development in the ventral spinal cord. In developing hindbrain, it colocalizes with a number of cranial motor neuron subpopulations from embryonic E11 to E14, while DCC is expressed by motor neurons at E12. Also expressed in non-neural structures, such as the basal plane of the hindbrain and midbrain, in the developing hypothalamus, thalamus and in the pallidum.

It localises to the cell membrane. The protein resides in the membrane raft. The protein localises to the cell projection. It is found in the neuron projection. In terms of biological role, receptor for netrin required for axon guidance. Functions in the netrin signaling pathway and promotes neurite outgrowth in response to NTN1. Mediates axon repulsion of neuronal growth cones in the developing nervous system in response to netrin. Axon repulsion in growth cones may be mediated by its association with DCC that may trigger signaling for repulsion. It also acts as a dependence receptor required for apoptosis induction when not associated with netrin ligand. This is Netrin receptor UNC5A (Unc5a) from Rattus norvegicus (Rat).